We begin with the raw amino-acid sequence, 536 residues long: Fanconi anemia group E protein (536 aa).

Residues 150-371 are interaction with FANCC; sequence MEGASPLSER…VLTRSLFLGR (222 aa). The tract at residues 171–252 is disordered; the sequence is LGLGGRRLKS…ADGGSASPIK (82 aa). Basic and acidic residues predominate over residues 230 to 239; the sequence is EKERPEHKSL. Serine 249 is modified (phosphoserine). Threonine 346 bears the Phosphothreonine; by CHEK1 mark. The residue at position 374 (serine 374) is a Phosphoserine; by CHEK1.

In terms of assembly, belongs to the multisubunit FA complex composed of FANCA, FANCB, FANCC, FANCE, FANCF, FANCG, FANCL/PHF9 and FANCM. The complex is not found in FA patients. Interacts with FANCC and FANCD2. Phosphorylated. Phosphorylation by CHEK1 at Thr-346 and Ser-374 regulates its function in DNA cross-links repair. In terms of processing, ubiquitinated. Phosphorylation by CHEK1 induces polyubiquitination and degradation.

It is found in the nucleus. Functionally, as part of the Fanconi anemia (FA) complex functions in DNA cross-links repair. Required for the nuclear accumulation of FANCC and provides a critical bridge between the FA complex and FANCD2. In Homo sapiens (Human), this protein is Fanconi anemia group E protein (FANCE).